The chain runs to 1445 residues: Spermatogenesis-associated protein 31E1 (1445 aa).

A helical transmembrane segment spans residues 64–84; that stretch reads WMMDFILTSVCGLVLLFLLLL. Disordered regions lie at residues 90–115 and 169–262; these read PPSP…SRSR and VPAK…PDSS. Positions 101–110 are enriched in basic and acidic residues; that stretch reads SREPQRERSG. A compositionally biased stretch (pro residues) spans 241–260; that stretch reads VFPPSPQPHGPLASSPPPPD. N408 carries N-linked (GlcNAc...) asparagine glycosylation. Disordered regions lie at residues 411–430, 460–557, 592–619, and 637–761; these read TQPQ…TVGN, NPSS…ERTQ, LSQP…PGVV, and QEQS…KEHL. Over residues 664-681 the composition is skewed to polar residues; the sequence is PQSQAEDTQQALLPSQPS. N-linked (GlcNAc...) asparagine glycosylation is found at N819, N906, and N1160. 4 disordered regions span residues 894-966, 1143-1242, 1254-1280, and 1378-1445; these read FLGK…TCSL, RLPT…IGDK, KGQT…RKGG, and SPKA…CLAS. Composition is skewed to polar residues over residues 906–915 and 1148–1165; these read NRTTSKSVPT and APLS…TASQ. Over residues 1202 to 1217 the composition is skewed to basic and acidic residues; the sequence is DKGEAHRRPRTGEQGH.

It belongs to the SPATA31 family.

The protein localises to the membrane. In terms of biological role, may play a role in spermatogenesis. The protein is Spermatogenesis-associated protein 31E1 (SPATA31E1) of Homo sapiens (Human).